Here is a 634-residue protein sequence, read N- to C-terminus: ATP-dependent zinc metalloprotease FtsH (634 aa).

Residues 1–5 (MNALK) are Cytoplasmic-facing. The chain crosses the membrane as a helical span at residues 6 to 26 (NFFIWAIIIGAAIVAFNLFEG). Topologically, residues 27-100 (KREFTTKVSL…VANPEPPGGW (74 aa)) are periplasmic. The helical transmembrane segment at 101-121 (LVNVFLSWLPILFFIGIWIFL) threads the bilayer. The Cytoplasmic portion of the chain corresponds to 122–634 (LRQMSGGGNV…KSEEVKEEVV (513 aa)). Residue 195–202 (GEPGVGKT) coordinates ATP. His418 is a Zn(2+) binding site. Glu419 is a catalytic residue. Zn(2+) is bound by residues His422 and Asp496. The segment at 615-634 (DRKSEENKELKSEEVKEEVV) is disordered.

It in the central section; belongs to the AAA ATPase family. This sequence in the C-terminal section; belongs to the peptidase M41 family. The isolated protease domain (residues 405-634) forms a stable hexamer. The cofactor is Zn(2+).

It is found in the cell inner membrane. Acts as a processive, ATP-dependent zinc metallopeptidase for both cytoplasmic and membrane proteins. Plays a role in the quality control of integral membrane proteins. This Aquifex aeolicus (strain VF5) protein is ATP-dependent zinc metalloprotease FtsH.